A 217-amino-acid chain; its full sequence is MNQTLLSSFGTPFERVELALDALREGRGVMVLDDEDRENEGDMIFPAETMTVEQMALTIRHGSGIVCLCITEDRRKQLDLPMMVENNTSAYGTGFTVTIEAAEGVTTGVSAADRVTTVRAAIKDGAKPSDLNRPGHVFPLRAQAGGVLTRGGHTEATIDLMTLAGFKPAGVLCELTNDDGTMARAPECIAFAGQHNMAVVTIEDLVAYRQAHERKAS.

D-ribulose 5-phosphate contacts are provided by residues 37–38 (RE), D42, 150–154 (RGGHT), and E174. Residue E38 coordinates Mg(2+). H153 is a Mg(2+) binding site.

Belongs to the DHBP synthase family. In terms of assembly, homodimer. The cofactor is Mg(2+). It depends on Mn(2+) as a cofactor.

It carries out the reaction D-ribulose 5-phosphate = (2S)-2-hydroxy-3-oxobutyl phosphate + formate + H(+). The protein operates within cofactor biosynthesis; riboflavin biosynthesis; 2-hydroxy-3-oxobutyl phosphate from D-ribulose 5-phosphate: step 1/1. Its function is as follows. Catalyzes the conversion of D-ribulose 5-phosphate to formate and 3,4-dihydroxy-2-butanone 4-phosphate. The polypeptide is 3,4-dihydroxy-2-butanone 4-phosphate synthase (Salmonella heidelberg (strain SL476)).